Here is a 166-residue protein sequence, read N- to C-terminus: NADH-quinone oxidoreductase subunit I (166 aa).

4Fe-4S ferredoxin-type domains are found at residues 57–87 and 97–126; these read LRRY…IESE and TRYD…VTPI. The [4Fe-4S] cluster site is built by C67, C70, C73, C77, C106, C109, C112, and C116.

This sequence belongs to the complex I 23 kDa subunit family. As to quaternary structure, NDH-1 is composed of 14 different subunits. Subunits NuoA, H, J, K, L, M, N constitute the membrane sector of the complex. Requires [4Fe-4S] cluster as cofactor.

The protein resides in the cell inner membrane. The enzyme catalyses a quinone + NADH + 5 H(+)(in) = a quinol + NAD(+) + 4 H(+)(out). NDH-1 shuttles electrons from NADH, via FMN and iron-sulfur (Fe-S) centers, to quinones in the respiratory chain. The immediate electron acceptor for the enzyme in this species is believed to be ubiquinone. Couples the redox reaction to proton translocation (for every two electrons transferred, four hydrogen ions are translocated across the cytoplasmic membrane), and thus conserves the redox energy in a proton gradient. This is NADH-quinone oxidoreductase subunit I from Legionella pneumophila (strain Lens).